A 557-amino-acid polypeptide reads, in one-letter code: Small ribosomal subunit protein bS1 (557 aa).

S1 motif domains are found at residues 21-87 (GSIV…LSRE), 105-171 (SATV…VSRR), 192-260 (GMEV…LGLK), 277-347 (GTKL…LGLK), 364-434 (GDRV…LGVK), and 451-520 (GAIV…LSIR).

It belongs to the bacterial ribosomal protein bS1 family.

Its function is as follows. Binds mRNA; thus facilitating recognition of the initiation point. It is needed to translate mRNA with a short Shine-Dalgarno (SD) purine-rich sequence. This Dickeya dadantii (strain 3937) (Erwinia chrysanthemi (strain 3937)) protein is Small ribosomal subunit protein bS1 (rpsA).